The primary structure comprises 196 residues: Beta-crystallin A4 (196 aa).

Thr-2 is modified (N-acetylthreonine). An N-terminal arm region spans residues 2 to 11; the sequence is TLQCTKSAGH. Beta/gamma crystallin 'Greek key' domains lie at 12–51 and 52–98; these read WRMV…KVLS and GAWV…RPVA. Residues 99-104 form a connecting peptide region; the sequence is CANHRD. Beta/gamma crystallin 'Greek key' domains follow at residues 105–146 and 147–195; these read SRLT…HVQS and GAWV…RRIQ.

It belongs to the beta/gamma-crystallin family. As to quaternary structure, homo/heterodimer, or complexes of higher-order. The structure of beta-crystallin oligomers seems to be stabilized through interactions between the N-terminal arms.

Its function is as follows. Crystallins are the dominant structural components of the vertebrate eye lens. In Mus musculus (Mouse), this protein is Beta-crystallin A4 (Cryba4).